The chain runs to 378 residues: Histidinol-phosphate aminotransferase 2 (378 aa).

N6-(pyridoxal phosphate)lysine is present on Lys240.

It belongs to the class-II pyridoxal-phosphate-dependent aminotransferase family. Histidinol-phosphate aminotransferase subfamily. In terms of assembly, homodimer. The cofactor is pyridoxal 5'-phosphate.

The catalysed reaction is L-histidinol phosphate + 2-oxoglutarate = 3-(imidazol-4-yl)-2-oxopropyl phosphate + L-glutamate. The protein operates within amino-acid biosynthesis; L-histidine biosynthesis; L-histidine from 5-phospho-alpha-D-ribose 1-diphosphate: step 7/9. The polypeptide is Histidinol-phosphate aminotransferase 2 (hisC2) (Caulobacter vibrioides (strain ATCC 19089 / CIP 103742 / CB 15) (Caulobacter crescentus)).